The following is a 54-amino-acid chain: Potassium channel toxin alpha-KTx 14.5 (54 aa).

The first 23 residues, 1-23 (MKIFFAILLILAVCSMAIWTVNG), serve as a signal peptide directing secretion. Intrachain disulfides connect Cys30/Cys46, Cys36/Cys51, and Cys40/Cys53.

The protein belongs to the short scorpion toxin superfamily. Potassium channel inhibitor family. Alpha-KTx 14 subfamily. In terms of tissue distribution, expressed by the venom gland.

Its subcellular location is the secreted. Inhibits potassium channels. May be active towards small conductance calcium-activated potassium channels (KCNN, SK), and less active towards voltage-gated potassium channels (Kv/KCN). This Mesobuthus gibbosus (Mediterranean checkered scorpion) protein is Potassium channel toxin alpha-KTx 14.5.